Here is a 190-residue protein sequence, read N- to C-terminus: Peptidyl-prolyl cis-trans isomerase A (190 aa).

The signal sequence occupies residues Met1–Ala24. Residues Gly27–Val188 form the PPIase cyclophilin-type domain.

Belongs to the cyclophilin-type PPIase family.

Its subcellular location is the periplasm. It catalyses the reaction [protein]-peptidylproline (omega=180) = [protein]-peptidylproline (omega=0). Its function is as follows. PPIases accelerate the folding of proteins. It catalyzes the cis-trans isomerization of proline imidic peptide bonds in oligopeptides. The sequence is that of Peptidyl-prolyl cis-trans isomerase A (ppiA) from Escherichia coli O157:H7.